Reading from the N-terminus, the 500-residue chain is Probable malate:quinone oxidoreductase (500 aa).

This sequence belongs to the MQO family. It depends on FAD as a cofactor.

It carries out the reaction (S)-malate + a quinone = a quinol + oxaloacetate. It functions in the pathway carbohydrate metabolism; tricarboxylic acid cycle; oxaloacetate from (S)-malate (quinone route): step 1/1. This is Probable malate:quinone oxidoreductase from Corynebacterium glutamicum (strain R).